The sequence spans 164 residues: Hydroxylaminobenzene mutase HabB (164 aa).

The next 4 membrane-spanning stretches (helical) occupy residues 16 to 36 (LLQL…LLPM), 50 to 70 (GVLN…LSLG), 78 to 98 (FGFA…AGFW), and 121 to 141 (LIAF…ALAL).

It localises to the cell membrane. The enzyme catalyses N-phenylhydroxylamine = 2-aminophenol. Its activity is regulated as follows. Addition of ZnSO(4) decreases the activity to 70%. Catalyzes the rearrangement of hydroxylaminobenzene to 2-aminophenol. In Ectopseudomonas oleovorans (Pseudomonas oleovorans), this protein is Hydroxylaminobenzene mutase HabB (habB).